Reading from the N-terminus, the 229-residue chain is 5'-methylthioadenosine/S-adenosylhomocysteine nucleosidase (229 aa).

Glutamate 12 acts as the Proton acceptor in catalysis. Residues glycine 78, isoleucine 152, and 173-174 (ME) each bind substrate. The Proton donor role is filled by aspartate 197.

The protein belongs to the PNP/UDP phosphorylase family. MtnN subfamily.

It catalyses the reaction S-adenosyl-L-homocysteine + H2O = S-(5-deoxy-D-ribos-5-yl)-L-homocysteine + adenine. The catalysed reaction is S-methyl-5'-thioadenosine + H2O = 5-(methylsulfanyl)-D-ribose + adenine. The enzyme catalyses 5'-deoxyadenosine + H2O = 5-deoxy-D-ribose + adenine. It participates in amino-acid biosynthesis; L-methionine biosynthesis via salvage pathway; S-methyl-5-thio-alpha-D-ribose 1-phosphate from S-methyl-5'-thioadenosine (hydrolase route): step 1/2. Functionally, catalyzes the irreversible cleavage of the glycosidic bond in both 5'-methylthioadenosine (MTA) and S-adenosylhomocysteine (SAH/AdoHcy) to adenine and the corresponding thioribose, 5'-methylthioribose and S-ribosylhomocysteine, respectively. Also cleaves 5'-deoxyadenosine, a toxic by-product of radical S-adenosylmethionine (SAM) enzymes, into 5-deoxyribose and adenine. The chain is 5'-methylthioadenosine/S-adenosylhomocysteine nucleosidase from Baumannia cicadellinicola subsp. Homalodisca coagulata.